The following is a 476-amino-acid chain: Protein transport protein Sec61 subunit alpha isoform 1 (476 aa).

Topologically, residues 2–28 (AIKFLEVIKPFCVILPEIQKPERKIQF) are cytoplasmic. A helical membrane pass occupies residues 29-46 (KEKVLWTAITLFIFLVCC). Topologically, residues 47–80 (QIPLFGIMSSDSADPFYWMRVILASNRGTLMELG) are lumenal. Residues 81–97 (ISPIVTSGLIMQLLAGA) traverse the membrane as a helical segment. At 98–109 (KIIEVGDTPKDR) the chain is on the cytoplasmic side. The helical transmembrane segment at 110-131 (ALFNGAQKLFGMIITIGQSIVY) threads the bilayer. The Lumenal segment spans residues 132–148 (VMTGMYGDPSEMGAGIC). The helical transmembrane segment at 149–167 (LLITIQLFVAGLIVLLLDE) threads the bilayer. Residues 168-177 (LLQKGYGLGS) lie on the Cytoplasmic side of the membrane. Residues 178-196 (GISLFIATNICETIVWKAF) traverse the membrane as a helical segment. Residues 197–241 (SPTTVNTGRGMEFEGAIIALFHLLATRTDKVRALREAFYRQNLPN) are Lumenal-facing. Residues 242–259 (LMNLIATIFVFAVVIYFQ) form a helical membrane-spanning segment. Topologically, residues 260 to 285 (GFRVDLPIKSARYRGQYNTYPIKLFY) are cytoplasmic. A helical transmembrane segment spans residues 286–306 (TSNIPIILQSALVSNLYVISQ). The Lumenal segment spans residues 307 to 356 (MLSARFSGNLLVSLLGTWSDTSSGGPARAYPVGGLCHYLSPPESFGSVLE). The helical transmembrane segment at 357–379 (DPVHAVVYIVFMLGSCAFFSKTW) threads the bilayer. Residues 380-420 (IEVSGSSAKDVAKQLKEQQMVMRGHRETSMVHELNRYIPTA) are Cytoplasmic-facing. Residues 421–437 (AAFGGLCIGALSVLADF) traverse the membrane as a helical segment. The Lumenal portion of the chain corresponds to 438-443 (LGAIGS). A helical membrane pass occupies residues 444-458 (GTGILLAVTIIYQYF). Residues 459–476 (EIFVKEQSEVGSMGALLF) are Cytoplasmic-facing.

Belongs to the SecY/SEC61-alpha family. In terms of assembly, the SEC61 channel-forming translocon complex consists of channel-forming core components SEC61A1, SEC61B and SEC61G and different auxiliary components such as SEC62 and SEC63. The SEC61 channel associates with the multi-pass translocon (MPT) complex.

The protein resides in the endoplasmic reticulum membrane. In terms of biological role, component of SEC61 channel-forming translocon complex that mediates transport of signal peptide-containing precursor polypeptides across the endoplasmic reticulum (ER). Forms a ribosome receptor and a gated pore in the ER membrane, both functions required for cotranslational translocation of nascent polypeptides. May cooperate with auxiliary protein SEC62, SEC63 and HSPA5/BiP to enable post-translational transport of small presecretory proteins. The SEC61 channel is also involved in ER membrane insertion of transmembrane proteins: it mediates membrane insertion of the first few transmembrane segments of proteins, while insertion of subsequent transmembrane regions of multi-pass membrane proteins is mediated by the multi-pass translocon (MPT) complex. The SEC61 channel cooperates with the translocating protein TRAM1 to import nascent proteins into the ER. Controls the passive efflux of calcium ions from the ER lumen to the cytosol through SEC61 channel, contributing to the maintenance of cellular calcium homeostasis. Plays a critical role in nephrogenesis, specifically at pronephros stage. The sequence is that of Protein transport protein Sec61 subunit alpha isoform 1 (SEC61A1) from Canis lupus familiaris (Dog).